We begin with the raw amino-acid sequence, 529 residues long: GTPase Obg (529 aa).

The Obg domain occupies 2–159 (PTFVDRVVLH…LDAVLELKTV (158 aa)). The interval 62–86 (FHPHQRASRGRPGQGSNRHGADGAD) is disordered. One can recognise an OBG-type G domain in the interval 160–332 (ADVALVGFPS…LSLALADLVA (173 aa)). Residues 166 to 173 (GFPSAGKS), 191 to 195 (FTTLV), 213 to 216 (DVPG), 284 to 287 (NKID), and 313 to 315 (STA) contribute to the GTP site. 2 residues coordinate Mg(2+): S173 and T193. One can recognise an OCT domain in the interval 350–427 (PRAVNEPDFT…IGEVTFDWEP (78 aa)). 2 disordered regions span residues 434 to 494 (LGNG…DRLR) and 506 to 529 (ARRA…EEEG). Composition is skewed to low complexity over residues 461-472 (AGTAASGAAPSP) and 508-520 (RAAA…VRGE).

The protein belongs to the TRAFAC class OBG-HflX-like GTPase superfamily. OBG GTPase family. Monomer. Mg(2+) is required as a cofactor.

It is found in the cytoplasm. An essential GTPase which binds GTP, GDP and possibly (p)ppGpp with moderate affinity, with high nucleotide exchange rates and a fairly low GTP hydrolysis rate. Plays a role in control of the cell cycle, stress response, ribosome biogenesis and in those bacteria that undergo differentiation, in morphogenesis control. In Frankia casuarinae (strain DSM 45818 / CECT 9043 / HFP020203 / CcI3), this protein is GTPase Obg.